A 459-amino-acid polypeptide reads, in one-letter code: DnaJ homolog subfamily A member 1 homolog (459 aa).

Residues 6–73 (EYYERLGVKP…EKRKMYDSYG (68 aa)) form the J domain. The CR-type zinc finger occupies 158 to 243 (GKLVKISISR…CKGKRVIQGK (86 aa)). Zn(2+)-binding residues include Cys171, Cys174, Cys188, Cys191, Cys215, Cys218, Cys231, and Cys234. CXXCXGXG motif repeat units follow at residues 171-178 (CKTCKGSG), 188-195 (CPTCNGSR), 215-222 (CHTCHGTG), and 231-238 (CKECKGKR). Residues 405–459 (NTNEQSSHGGAGGAYQQHGGAYGHQKQQQQGFNPADFGAQFGGGGPQQAQQCQQQ) form a disordered region. Residues 418-435 (AYQQHGGAYGHQKQQQQG) are compositionally biased toward low complexity. The residue at position 456 (Cys456) is a Cysteine methyl ester. Cys456 carries S-farnesyl cysteine lipidation. The propeptide at 457-459 (QQQ) is removed in mature form.

Its subcellular location is the membrane. It is found in the cytoplasm. It localises to the microsome. The protein resides in the mitochondrion. The protein localises to the nucleus. Its subcellular location is the perinuclear region. Co-chaperone for Hsp70 family members. Plays a role in protein transport into mitochondria and in the regulation of apoptosis via its role as co-chaperone. The protein is DnaJ homolog subfamily A member 1 homolog (dnaja1) of Dictyostelium discoideum (Social amoeba).